The primary structure comprises 134 residues: Retinol-binding protein 2 (134 aa).

All-trans-retinol is bound by residues Lys-41 and Gln-109.

The protein belongs to the calycin superfamily. Fatty-acid binding protein (FABP) family.

It is found in the cytoplasm. Functionally, intracellular transport of retinol. The chain is Retinol-binding protein 2 (RBP2) from Sus scrofa (Pig).